A 390-amino-acid chain; its full sequence is Dual-specificity RNA methyltransferase RlmN (390 aa).

Catalysis depends on Glu-126, which acts as the Proton acceptor. The Radical SAM core domain maps to 134 to 374 (TEDRGAVCLS…APVRTPRGQD (241 aa)). Cys-141 and Cys-379 form a disulfide bridge. Residues Cys-148, Cys-152, and Cys-155 each coordinate [4Fe-4S] cluster. S-adenosyl-L-methionine-binding positions include 205 to 206 (GE), Ser-237, 259 to 261 (SLH), and Asn-336. The active-site S-methylcysteine intermediate is the Cys-379.

It belongs to the radical SAM superfamily. RlmN family. It depends on [4Fe-4S] cluster as a cofactor.

The protein localises to the cytoplasm. The enzyme catalyses adenosine(2503) in 23S rRNA + 2 reduced [2Fe-2S]-[ferredoxin] + 2 S-adenosyl-L-methionine = 2-methyladenosine(2503) in 23S rRNA + 5'-deoxyadenosine + L-methionine + 2 oxidized [2Fe-2S]-[ferredoxin] + S-adenosyl-L-homocysteine. It carries out the reaction adenosine(37) in tRNA + 2 reduced [2Fe-2S]-[ferredoxin] + 2 S-adenosyl-L-methionine = 2-methyladenosine(37) in tRNA + 5'-deoxyadenosine + L-methionine + 2 oxidized [2Fe-2S]-[ferredoxin] + S-adenosyl-L-homocysteine. Specifically methylates position 2 of adenine 2503 in 23S rRNA and position 2 of adenine 37 in tRNAs. m2A2503 modification seems to play a crucial role in the proofreading step occurring at the peptidyl transferase center and thus would serve to optimize ribosomal fidelity. The protein is Dual-specificity RNA methyltransferase RlmN of Acidiphilium cryptum (strain JF-5).